The following is a 158-amino-acid chain: 2-C-methyl-D-erythritol 2,4-cyclodiphosphate synthase (158 aa).

Asp8 and His10 together coordinate a divalent metal cation. 4-CDP-2-C-methyl-D-erythritol 2-phosphate is bound by residues 8–10 and 34–35; these read DSH and HS. Residue His42 participates in a divalent metal cation binding. 4-CDP-2-C-methyl-D-erythritol 2-phosphate is bound by residues 56–58, 61–65, and Arg142; these read DIG and FPDND.

Belongs to the IspF family. Homotrimer. A divalent metal cation serves as cofactor.

The enzyme catalyses 4-CDP-2-C-methyl-D-erythritol 2-phosphate = 2-C-methyl-D-erythritol 2,4-cyclic diphosphate + CMP. Its pathway is isoprenoid biosynthesis; isopentenyl diphosphate biosynthesis via DXP pathway; isopentenyl diphosphate from 1-deoxy-D-xylulose 5-phosphate: step 4/6. In terms of biological role, involved in the biosynthesis of isopentenyl diphosphate (IPP) and dimethylallyl diphosphate (DMAPP), two major building blocks of isoprenoid compounds. Catalyzes the conversion of 4-diphosphocytidyl-2-C-methyl-D-erythritol 2-phosphate (CDP-ME2P) to 2-C-methyl-D-erythritol 2,4-cyclodiphosphate (ME-CPP) with a corresponding release of cytidine 5-monophosphate (CMP). The chain is 2-C-methyl-D-erythritol 2,4-cyclodiphosphate synthase from Brachyspira hyodysenteriae (strain ATCC 49526 / WA1).